The chain runs to 233 residues: Orotidine 5'-phosphate decarboxylase (233 aa).

Residues Asp9, Lys31, 58-67 (DLKLHDIPNT), Thr120, Arg182, Gln191, Gly211, and Arg212 each bind substrate. Lys60 acts as the Proton donor in catalysis.

This sequence belongs to the OMP decarboxylase family. Type 1 subfamily. In terms of assembly, homodimer.

It carries out the reaction orotidine 5'-phosphate + H(+) = UMP + CO2. Its pathway is pyrimidine metabolism; UMP biosynthesis via de novo pathway; UMP from orotate: step 2/2. In terms of biological role, catalyzes the decarboxylation of orotidine 5'-monophosphate (OMP) to uridine 5'-monophosphate (UMP). In Listeria monocytogenes serovar 1/2a (strain ATCC BAA-679 / EGD-e), this protein is Orotidine 5'-phosphate decarboxylase.